The sequence spans 587 residues: MDRNSVIGFSLIAVIMIVWLQFMKPEQKTMLDPVPPSREMVQKDAAENAPASAAPETAAESLGSFAKASTGTEQIITVDNDLFTAELSSKGATLKSMVLKKHLDVNGKPFNLISEKNKGALSMLFLSNDGKRIDTRDLYFRSLDTKKSETVTGKEKLSVSFVLDVDASRSMQVTYTFTGDSYVIDYDLKLNGFGSTLAGNEYQLDWDGGLVYSEKDTADESHNAISSAYLGGGLLKLDAKDSKKRYQEEESGKAEWVAVRNKYFVAAMIPERETEGVFLQGTKKDGVDFENYTAALKMMIPAGQNSVTDRYRLYVGPLDYNTVRSLHVDLEKIMDFGWDWLTRPFAEYLILPIFNWMNKYVTNYGLIIIIFAFLIKTVTWPLSLASTKSMKKMSALQPMMKEIQEKYKNDPAKLQSELGRIYKEAGVNPLGGCLPTVIQMPLLFAMFYVFRSSIQLRQHGFLWVKDLSVPDSILDFGFKLPLYGDHIALMPILMAVTVFFQQKITPTTQTNDQMKIMIWMFPAMMLLFFNNMPSGLALYYLMFNVFSIAQQAYINATVSDEDKAAAAMQVAASASPSKGAKKGGKKK.

Transmembrane regions (helical) follow at residues 5 to 25 (SVIG…FMKP), 365 to 385 (GLII…LSLA), 430 to 450 (LGGC…FYVF), 480 to 500 (LPLY…TVFF), and 516 to 536 (IMIW…PSGL).

The protein belongs to the OXA1/ALB3/YidC family. Type 1 subfamily. In terms of assembly, interacts with the Sec translocase complex via SecD. Specifically interacts with transmembrane segments of nascent integral membrane proteins during membrane integration.

The protein resides in the cell inner membrane. Required for the insertion and/or proper folding and/or complex formation of integral membrane proteins into the membrane. Involved in integration of membrane proteins that insert both dependently and independently of the Sec translocase complex, as well as at least some lipoproteins. Aids folding of multispanning membrane proteins. The chain is Membrane protein insertase YidC from Chlorobaculum parvum (strain DSM 263 / NCIMB 8327) (Chlorobium vibrioforme subsp. thiosulfatophilum).